Reading from the N-terminus, the 73-residue chain is Toxin Td9 (73 aa).

An N-terminal signal peptide occupies residues 1–7 (IGMVAEC). The region spanning 8 to 70 (KDGYLVGDDG…IWNSATNSCG (63 aa)) is the LCN-type CS-alpha/beta domain. Cystine bridges form between cysteine 18/cysteine 69, cysteine 22/cysteine 44, cysteine 30/cysteine 50, and cysteine 34/cysteine 52. Lysine 71 is modified (lysine amide).

It belongs to the long (4 C-C) scorpion toxin superfamily. Sodium channel inhibitor family. Beta subfamily. Expressed by the venom gland.

The protein resides in the secreted. In terms of biological role, beta toxins bind voltage-independently at site-4 of sodium channels (Nav) and shift the voltage of activation toward more negative potentials thereby affecting sodium channel activation and promoting spontaneous and repetitive firing. This chain is Toxin Td9, found in Tityus discrepans (Venezuelan scorpion).